The sequence spans 154 residues: Ribonuclease H (154 aa).

The 142-residue stretch at 1–142 folds into the RNase H type-1 domain; it reads MRKQVEIFTD…CDELARAAAS (142 aa). Mg(2+)-binding residues include Asp10, Glu48, Asp70, and Asp134.

This sequence belongs to the RNase H family. Monomer. Requires Mg(2+) as cofactor.

The protein resides in the cytoplasm. The enzyme catalyses Endonucleolytic cleavage to 5'-phosphomonoester.. Its function is as follows. Endonuclease that specifically degrades the RNA of RNA-DNA hybrids. The chain is Ribonuclease H from Pectobacterium atrosepticum (strain SCRI 1043 / ATCC BAA-672) (Erwinia carotovora subsp. atroseptica).